The chain runs to 340 residues: Entry-fusion complex protein OPG094 (340 aa).

The disordered stretch occupies residues Met-1–Thr-20. The N-myristoyl glycine; by host moiety is linked to residue Gly-2. Residues Gly-2 to Asp-319 lie on the Virion surface side of the membrane. A helical; Signal-anchor for type II membrane protein membrane pass occupies residues Leu-320–Ile-340.

Belongs to the orthopoxvirus OPG086 family. Interacts with OPG143. Component of the entry fusion complex (EFC) composed of OPG053, OPG076, OPG086, OPG094, OPG095, OPG099, OPG107, OPG143, OPG104, OPG147 and OPG155. Except for OPG095 and OPG053, each of the EFC proteins is required for assembly or stability of the complex. Unglycosylated because produced in viral factories instead of the classic ER -Golgi route.

The protein localises to the virion membrane. In terms of biological role, component of the entry fusion complex (EFC), which consists of 11 proteins. During cell infection, this complex mediates entry of the virion core into the host cytoplasm by a two-step mechanism consisting of lipid mixing of the viral and cellular membranes and subsequent pore formation. The polypeptide is Entry-fusion complex protein OPG094 (OPG094) (Homo sapiens (Human)).